The following is a 294-amino-acid chain: 4-diphosphocytidyl-2-C-methyl-D-erythritol kinase (294 aa).

The active site involves Lys-15. Position 101–111 (Pro-101–Ser-111) interacts with ATP. Asp-143 is a catalytic residue.

The protein belongs to the GHMP kinase family. IspE subfamily.

It carries out the reaction 4-CDP-2-C-methyl-D-erythritol + ATP = 4-CDP-2-C-methyl-D-erythritol 2-phosphate + ADP + H(+). It participates in isoprenoid biosynthesis; isopentenyl diphosphate biosynthesis via DXP pathway; isopentenyl diphosphate from 1-deoxy-D-xylulose 5-phosphate: step 3/6. Its function is as follows. Catalyzes the phosphorylation of the position 2 hydroxy group of 4-diphosphocytidyl-2C-methyl-D-erythritol. This Fusobacterium nucleatum subsp. nucleatum (strain ATCC 25586 / DSM 15643 / BCRC 10681 / CIP 101130 / JCM 8532 / KCTC 2640 / LMG 13131 / VPI 4355) protein is 4-diphosphocytidyl-2-C-methyl-D-erythritol kinase.